The chain runs to 316 residues: Nod factor export ATP-binding protein I (316 aa).

One can recognise an ABC transporter domain in the interval 18–248; sequence IDFSDVSKTY…LIGCEVIEIY (231 aa). 50 to 57 is an ATP binding site; the sequence is GPNGAGKS.

This sequence belongs to the ABC transporter superfamily. Lipooligosaccharide exporter (TC 3.A.1.102) family. In terms of assembly, the complex is composed of two ATP-binding proteins (NodI) and two transmembrane proteins (NodJ).

The protein resides in the cell inner membrane. In terms of biological role, part of the ABC transporter complex NodIJ involved in the export of the nodulation factors (Nod factors), the bacterial signal molecules that induce symbiosis and subsequent nodulation induction. Nod factors are LCO (lipo-chitin oligosaccharide), a modified beta-1,4-linked N-acetylglucosamine oligosaccharide. This subunit is responsible for energy coupling to the transport system. This Rhizobium etli (strain ATCC 51251 / DSM 11541 / JCM 21823 / NBRC 15573 / CFN 42) protein is Nod factor export ATP-binding protein I.